Reading from the N-terminus, the 436-residue chain is tRNA-2-methylthio-N(6)-dimethylallyladenosine synthase (436 aa).

Positions 5–121 (RKLFIKTYGC…LPDMLERTEG (117 aa)) constitute an MTTase N-terminal domain. [4Fe-4S] cluster-binding residues include Cys14, Cys50, Cys84, Cys158, Cys162, and Cys165. Residues 144 to 373 (ALRGPTAFLT…LGEQQRAAQA (230 aa)) enclose the Radical SAM core domain. In terms of domain architecture, TRAM spans 373–435 (AAMVGRELGV…PNSLAGERIG (63 aa)).

The protein belongs to the methylthiotransferase family. MiaB subfamily. As to quaternary structure, monomer. It depends on [4Fe-4S] cluster as a cofactor.

The protein localises to the cytoplasm. The catalysed reaction is N(6)-dimethylallyladenosine(37) in tRNA + (sulfur carrier)-SH + AH2 + 2 S-adenosyl-L-methionine = 2-methylsulfanyl-N(6)-dimethylallyladenosine(37) in tRNA + (sulfur carrier)-H + 5'-deoxyadenosine + L-methionine + A + S-adenosyl-L-homocysteine + 2 H(+). Its function is as follows. Catalyzes the methylthiolation of N6-(dimethylallyl)adenosine (i(6)A), leading to the formation of 2-methylthio-N6-(dimethylallyl)adenosine (ms(2)i(6)A) at position 37 in tRNAs that read codons beginning with uridine. The sequence is that of tRNA-2-methylthio-N(6)-dimethylallyladenosine synthase from Cereibacter sphaeroides (strain ATCC 17025 / ATH 2.4.3) (Rhodobacter sphaeroides).